We begin with the raw amino-acid sequence, 248 residues long: 3-deoxy-manno-octulosonate cytidylyltransferase (248 aa).

The protein belongs to the KdsB family.

It is found in the cytoplasm. It carries out the reaction 3-deoxy-alpha-D-manno-oct-2-ulosonate + CTP = CMP-3-deoxy-beta-D-manno-octulosonate + diphosphate. Its pathway is nucleotide-sugar biosynthesis; CMP-3-deoxy-D-manno-octulosonate biosynthesis; CMP-3-deoxy-D-manno-octulosonate from 3-deoxy-D-manno-octulosonate and CTP: step 1/1. The protein operates within bacterial outer membrane biogenesis; lipopolysaccharide biosynthesis. Functionally, activates KDO (a required 8-carbon sugar) for incorporation into bacterial lipopolysaccharide in Gram-negative bacteria. In Salmonella agona (strain SL483), this protein is 3-deoxy-manno-octulosonate cytidylyltransferase.